Consider the following 757-residue polypeptide: NAD(P)H-quinone oxidoreductase subunit 5, chloroplastic (757 aa).

17 helical membrane passes run 9-29, 40-60, 89-109, 122-139, 147-167, 185-205, 219-239, 258-278, 280-300, 327-347, 354-374, 396-416, 425-445, 544-564, 607-627, 692-712, and 718-738; these read WIIP…LLLV, WAFP…DLSV, IDPL…MVLI, LRFF…LGLV, IYIF…FWFT, GDFG…SFEF, NGVN…GAVA, TPIS…FLVA, LLPL…IGVI, LGYI…FHLI, ALLF…VGYS, MTFL…CFWS, WLYS…TAFY, LLPL…GIPF, SIAY…YLFF, GIMN…KYLG, and SYLF…IFFF.

The protein belongs to the complex I subunit 5 family. NDH is composed of at least 16 different subunits, 5 of which are encoded in the nucleus.

Its subcellular location is the plastid. The protein localises to the chloroplast thylakoid membrane. The enzyme catalyses a plastoquinone + NADH + (n+1) H(+)(in) = a plastoquinol + NAD(+) + n H(+)(out). The catalysed reaction is a plastoquinone + NADPH + (n+1) H(+)(in) = a plastoquinol + NADP(+) + n H(+)(out). NDH shuttles electrons from NAD(P)H:plastoquinone, via FMN and iron-sulfur (Fe-S) centers, to quinones in the photosynthetic chain and possibly in a chloroplast respiratory chain. The immediate electron acceptor for the enzyme in this species is believed to be plastoquinone. Couples the redox reaction to proton translocation, and thus conserves the redox energy in a proton gradient. This Drimys granadensis protein is NAD(P)H-quinone oxidoreductase subunit 5, chloroplastic (ndhF).